A 460-amino-acid polypeptide reads, in one-letter code: GTPase Der (460 aa).

EngA-type G domains follow at residues 9 to 171 (KTIA…SLNQ) and 199 to 370 (IQVG…ECFS). GTP is bound by residues 15–22 (GQPNVGKS), 62–66 (DTGGM), 123–126 (NKID), 205–212 (GRVNVGKS), 252–256 (DTAGI), and 316–319 (NKWD). The KH-like domain occupies 371 to 455 (RRIPTSLLNS…PLILNAKDKK (85 aa)).

It belongs to the TRAFAC class TrmE-Era-EngA-EngB-Septin-like GTPase superfamily. EngA (Der) GTPase family. In terms of assembly, associates with the 50S ribosomal subunit.

In terms of biological role, GTPase that plays an essential role in the late steps of ribosome biogenesis. The polypeptide is GTPase Der (Helicobacter pylori (strain G27)).